The following is a 452-amino-acid chain: Mannan endo-1,6-alpha-mannosidase DCW1 (452 aa).

The N-terminal stretch at 1–18 (MKFSIYLIISLFSSFSHA) is a signal peptide. Asn-25, Asn-81, Asn-106, Asn-130, Asn-200, Asn-237, Asn-240, Asn-262, Asn-271, and Asn-286 each carry an N-linked (GlcNAc...) asparagine glycan. Gly-431 carries the GPI-anchor amidated glycine lipid modification. The propeptide at 432–452 (AGIITAIIGASLVGSCVWLIL) is removed in mature form.

It belongs to the glycosyl hydrolase 76 family.

It is found in the cell membrane. It catalyses the reaction Random hydrolysis of (1-&gt;6)-alpha-D-mannosidic linkages in unbranched (1-&gt;6)-mannans.. Probable mannosidase required for normal synthesis of the cell wall. This Candida albicans (strain SC5314 / ATCC MYA-2876) (Yeast) protein is Mannan endo-1,6-alpha-mannosidase DCW1 (DCW1).